The primary structure comprises 420 residues: MGFITKAIPLALAAASVINGAEIMETRAGVQTLADKYIVVMNDGMTDKDFDSHRSWVNRTHRRRLIRRGAKAMGGMKHTYRFPTGLKGYSGHFDEQMINEISKRADVKYIERDARVQINAIEQQDNVPSWGLARVGSKEPGGTTYYYDGTAGEGSTAYVIDTGTDIQHEEFEGRATWGANFVDDMDMDCNGHGTHVSGTIGGKTFGVAKKSNVVAVKVLDCNGSGSNSGVIMGMEWATKDAQQKGADKAVANMSLGGAFSQASNDAAAAIAKGGVFLAVAAGNDNVDAADSSPASEPSICTVAASTEQDSKADFSNFGQVVDVYAPGDSITSAKPGGGSQVLSGTSMATPHVAGLGAYLIGLGKGGGPGLCDTIKQTAIDVIQNPGASTTSKLINNGSGIGFLSFPLNIYEEQWSKLFDL.

Positions 1–20 (MGFITKAIPLALAAASVING) are cleaved as a signal peptide. A propeptide spanning residues 21–119 (AEIMETRAGV…IERDARVQIN (99 aa)) is cleaved from the precursor. An Inhibitor I9 domain is found at 36–118 (KYIVVMNDGM…YIERDARVQI (83 aa)). In terms of domain architecture, Peptidase S8 spans 129–413 (SWGLARVGSK…SFPLNIYEEQ (285 aa)). Residues D161 and H192 each act as charge relay system in the active site. Residues N222 and N252 are each glycosylated (N-linked (GlcNAc...) asparagine). The active-site Charge relay system is S346. An N-linked (GlcNAc...) asparagine glycan is attached at N396.

It belongs to the peptidase S8 family.

Its subcellular location is the secreted. In terms of biological role, secreted subtilisin-like serine protease with keratinolytic activity that contributes to pathogenicity. This is Subtilisin-like protease 7 (SUB7) from Arthroderma benhamiae (strain ATCC MYA-4681 / CBS 112371) (Trichophyton mentagrophytes).